The following is a 271-amino-acid chain: Formamidopyrimidine-DNA glycosylase (271 aa).

The active-site Schiff-base intermediate with DNA is the Pro-2. Glu-3 serves as the catalytic Proton donor. Lys-58 acts as the Proton donor; for beta-elimination activity in catalysis. The DNA site is built by His-91, Arg-110, and Arg-152. The FPG-type zinc-finger motif lies at 237-271 (LVYGREGQPCVHCGRPIRCETIGQRSSYFCTRCQR). Residue Arg-261 is the Proton donor; for delta-elimination activity of the active site.

Belongs to the FPG family. In terms of assembly, monomer. It depends on Zn(2+) as a cofactor.

The enzyme catalyses Hydrolysis of DNA containing ring-opened 7-methylguanine residues, releasing 2,6-diamino-4-hydroxy-5-(N-methyl)formamidopyrimidine.. It catalyses the reaction 2'-deoxyribonucleotide-(2'-deoxyribose 5'-phosphate)-2'-deoxyribonucleotide-DNA = a 3'-end 2'-deoxyribonucleotide-(2,3-dehydro-2,3-deoxyribose 5'-phosphate)-DNA + a 5'-end 5'-phospho-2'-deoxyribonucleoside-DNA + H(+). Involved in base excision repair of DNA damaged by oxidation or by mutagenic agents. Acts as a DNA glycosylase that recognizes and removes damaged bases. Has a preference for oxidized purines, such as 7,8-dihydro-8-oxoguanine (8-oxoG). Has AP (apurinic/apyrimidinic) lyase activity and introduces nicks in the DNA strand. Cleaves the DNA backbone by beta-delta elimination to generate a single-strand break at the site of the removed base with both 3'- and 5'-phosphates. The protein is Formamidopyrimidine-DNA glycosylase of Syntrophotalea carbinolica (strain DSM 2380 / NBRC 103641 / GraBd1) (Pelobacter carbinolicus).